We begin with the raw amino-acid sequence, 96 residues long: Co-chaperonin GroES (96 aa).

It belongs to the GroES chaperonin family. As to quaternary structure, heptamer of 7 subunits arranged in a ring. Interacts with the chaperonin GroEL.

It is found in the cytoplasm. Together with the chaperonin GroEL, plays an essential role in assisting protein folding. The GroEL-GroES system forms a nano-cage that allows encapsulation of the non-native substrate proteins and provides a physical environment optimized to promote and accelerate protein folding. GroES binds to the apical surface of the GroEL ring, thereby capping the opening of the GroEL channel. In Haemophilus influenzae (strain ATCC 51907 / DSM 11121 / KW20 / Rd), this protein is Co-chaperonin GroES.